The chain runs to 646 residues: Protein SENSITIVE TO UV 2 (646 aa).

Residues P42 to Q70 form a disordered region. Residues T48 to Q70 show a composition bias toward polar residues. A Nuclear localization signal motif is present at residues N119 to K126. Positions D123–G157 form a coiled coil. Residues K376 to I646 enclose the Phosphatase tensin-type domain.

The protein belongs to the serpin family. Forms multimers through the coiled-coil domain. Post-translationally, probably phosphorylated by ATR. In terms of tissue distribution, accumulates throughout the root tip.

It is found in the nucleus. The protein resides in the cytoplasm. Required for tolerance to DNA-damaging and cross-linking agents such as UVB irradiation, gamma-radiation, aphidicolin, ionizing radiation and hydroxyurea (HU), cisplatin (CDDP) and mitomycin C (MMC). Involved in cell-cycle G2/M arrest in response to DNA damage. Required for aluminum-dependent gene regulation and root growth inhibition in an ATR-dependent manner by halting cell cycle progression and triggering loss of the quiescent center (QC). In Arabidopsis thaliana (Mouse-ear cress), this protein is Protein SENSITIVE TO UV 2.